The chain runs to 123 residues: Small ribosomal subunit protein uS13 (123 aa).

A disordered region spans residues 99 to 123; it reads RGQRTRTNARTRKGPRRTVGVKRKK.

The protein belongs to the universal ribosomal protein uS13 family. In terms of assembly, part of the 30S ribosomal subunit. Forms a loose heterodimer with protein S19. Forms two bridges to the 50S subunit in the 70S ribosome.

Located at the top of the head of the 30S subunit, it contacts several helices of the 16S rRNA. In the 70S ribosome it contacts the 23S rRNA (bridge B1a) and protein L5 of the 50S subunit (bridge B1b), connecting the 2 subunits; these bridges are implicated in subunit movement. Contacts the tRNAs in the A and P-sites. The sequence is that of Small ribosomal subunit protein uS13 from Carboxydothermus hydrogenoformans (strain ATCC BAA-161 / DSM 6008 / Z-2901).